The primary structure comprises 301 residues: MSTKREDHLRKGADVTPTEALVAGSIAGAISRAFTAPLDTIKIRLQLQPKGFKHRKSVVTIVKNLLENEGIIALWKGNVPAEILYILYGGVQFGSYSIISKSVSKLENNYRINLSSANHSLIVGIGSGIVSTLVTYPFDLLRTRLIANKNRGLLSMTGTIKDIIKLEGIRGIYAGIRPAMLSVSSTTGLMFWSYELARELSNNYQRVPFIEAICGFIAGATSKGITFPLDTLRKRCQMCSVVHGRPYTASHIFVTILKNEGVFGLYKGFGISVLKTAPTSAISLFMYEYSLSFIRKIRVIE.

3 Solcar repeats span residues 15-102 (VTPT…ISKS), 115-200 (SSAN…AREL), and 206-293 (RVPF…SLSF). The next 6 helical transmembrane spans lie at 20–38 (ALVA…TAPL), 79–99 (VPAE…YSII), 121–141 (LIVG…FDLL), 172–192 (IYAG…LMFW), 207–227 (VPFI…GITF), and 252–272 (IFVT…FGIS).

It belongs to the mitochondrial carrier (TC 2.A.29) family.

It localises to the mitochondrion inner membrane. Functionally, mitochondrial transporter that mediates uptake of thiamine pyrophosphate (ThPP) into mitochondria. The chain is Mitochondrial thiamine pyrophosphate carrier 1 (TPC1) from Candida albicans (strain SC5314 / ATCC MYA-2876) (Yeast).